Here is a 375-residue protein sequence, read N- to C-terminus: Succinyl-diaminopimelate desuccinylase (375 aa).

Zn(2+) is bound at residue histidine 66. Aspartate 68 is an active-site residue. Position 99 (aspartate 99) interacts with Zn(2+). The active-site Proton acceptor is the glutamate 133. Positions 134, 162, and 348 each coordinate Zn(2+).

Belongs to the peptidase M20A family. DapE subfamily. Homodimer. Zn(2+) serves as cofactor. It depends on Co(2+) as a cofactor.

The catalysed reaction is N-succinyl-(2S,6S)-2,6-diaminopimelate + H2O = (2S,6S)-2,6-diaminopimelate + succinate. The protein operates within amino-acid biosynthesis; L-lysine biosynthesis via DAP pathway; LL-2,6-diaminopimelate from (S)-tetrahydrodipicolinate (succinylase route): step 3/3. Functionally, catalyzes the hydrolysis of N-succinyl-L,L-diaminopimelic acid (SDAP), forming succinate and LL-2,6-diaminopimelate (DAP), an intermediate involved in the bacterial biosynthesis of lysine and meso-diaminopimelic acid, an essential component of bacterial cell walls. This is Succinyl-diaminopimelate desuccinylase from Buchnera aphidicola subsp. Acyrthosiphon pisum (strain APS) (Acyrthosiphon pisum symbiotic bacterium).